The following is a 955-amino-acid chain: Disintegrin and metalloproteinase domain-containing protein 19 (955 aa).

The first 25 residues, 1 to 25, serve as a signal peptide directing secretion; that stretch reads MPGGAGAARLCLLAFALQPLRPRAA. A propeptide spanning residues 26 to 202 is cleaved from the precursor; the sequence is REPGWTRGSE…QTKKRPRRMK (177 aa). A Cysteine switch motif is present at residues 130–137; it reads STCRGIRG. A Zn(2+)-binding site is contributed by Cys132. Asn144 carries N-linked (GlcNAc...) asparagine glycosylation. Over 203 to 699 the chain is Extracellular; sequence REDLNSMKYV…IDSGPMPPES (497 aa). The 199-residue stretch at 210 to 408 folds into the Peptidase M12B domain; the sequence is KYVELYLVAD…GGGMCLSNMP (199 aa). Intrachain disulfides connect Cys320-Cys403, Cys360-Cys387, and Cys361-Cys370. His345 is a binding site for Zn(2+). Residue Glu346 is part of the active site. The Zn(2+) site is built by His349 and His355. Residues 416 to 502 enclose the Disintegrin domain; it reads GRRCGNGYLE…HCPTNFYQMD (87 aa). N-linked (GlcNAc...) asparagine glycans are attached at residues Asn444 and Asn447. Residues Cys474 and Cys494 are joined by a disulfide bond. Residue Asn645 is glycosylated (N-linked (GlcNAc...) asparagine). One can recognise an EGF-like domain in the interval 650 to 682; sequence ETEGCGKKCNGHGVCNNNQNCHCLPGWAPPFCN. Disulfide bonds link Cys654–Cys664, Cys658–Cys670, and Cys672–Cys681. Residues 700–720 traverse the membrane as a helical segment; it reads VGPVVAGVLVAILVLAVLMLM. The Cytoplasmic portion of the chain corresponds to 721-955; sequence YYCCRQNNKL…AKHSCFLVPA (235 aa). A compositionally biased stretch (polar residues) spans 753-771; sequence SQNSGTGHANPTFKLQTPQ. The disordered stretch occupies residues 753 to 917; that stretch reads SQNSGTGHAN…LKVKAGTRGL (165 aa). Composition is skewed to pro residues over residues 787–796 and 833–844; these read SQPPPRPPPD and RPPPSRPIPPAP. Positions 833-844 match the SH3-binding motif; the sequence is RPPPSRPIPPAP.

As to quaternary structure, interacts with SH3PXD2A. Zn(2+) serves as cofactor. In terms of processing, the precursor is cleaved by a furin endopeptidase. As to expression, expressed in many normal organ tissues and several cancer cell lines.

The protein localises to the membrane. Functionally, participates in the proteolytic processing of beta-type neuregulin isoforms which are involved in neurogenesis and synaptogenesis, suggesting a regulatory role in glial cell. Also cleaves alpha-2 macroglobulin. May be involved in osteoblast differentiation and/or osteoblast activity in bone. In Homo sapiens (Human), this protein is Disintegrin and metalloproteinase domain-containing protein 19 (ADAM19).